The chain runs to 810 residues: Lon protease (810 aa).

The 195-residue stretch at 32–226 (LPAIAMRSNM…RILDILARET (195 aa)) folds into the Lon N-terminal domain. 376-383 (GPPGVGKT) contacts ATP. The region spanning 612 to 791 (KPMIGVTTGL…EEVLEVALNE (180 aa)) is the Lon proteolytic domain. Active-site residues include S697 and K740.

This sequence belongs to the peptidase S16 family. In terms of assembly, homohexamer. Organized in a ring with a central cavity.

It is found in the cytoplasm. The catalysed reaction is Hydrolysis of proteins in presence of ATP.. Functionally, ATP-dependent serine protease that mediates the selective degradation of mutant and abnormal proteins as well as certain short-lived regulatory proteins. Required for cellular homeostasis and for survival from DNA damage and developmental changes induced by stress. Degrades polypeptides processively to yield small peptide fragments that are 5 to 10 amino acids long. Binds to DNA in a double-stranded, site-specific manner. The polypeptide is Lon protease (Fervidobacterium nodosum (strain ATCC 35602 / DSM 5306 / Rt17-B1)).